A 707-amino-acid chain; its full sequence is DNA ligase (707 aa).

Residues 36–40 (DADFD), 85–86 (SL), and glutamate 116 contribute to the NAD(+) site. Lysine 118 functions as the N6-AMP-lysine intermediate in the catalytic mechanism. The NAD(+) site is built by arginine 139, glutamate 180, lysine 298, and lysine 322. Positions 416, 419, 434, and 440 each coordinate Zn(2+). A BRCT domain is found at 613–707 (AASSKIAGRS…STHVDPERMV (95 aa)).

The protein belongs to the NAD-dependent DNA ligase family. LigA subfamily. Requires Mg(2+) as cofactor. It depends on Mn(2+) as a cofactor.

The catalysed reaction is NAD(+) + (deoxyribonucleotide)n-3'-hydroxyl + 5'-phospho-(deoxyribonucleotide)m = (deoxyribonucleotide)n+m + AMP + beta-nicotinamide D-nucleotide.. DNA ligase that catalyzes the formation of phosphodiester linkages between 5'-phosphoryl and 3'-hydroxyl groups in double-stranded DNA using NAD as a coenzyme and as the energy source for the reaction. It is essential for DNA replication and repair of damaged DNA. The protein is DNA ligase of Nitrosospira multiformis (strain ATCC 25196 / NCIMB 11849 / C 71).